The primary structure comprises 49 residues: Large ribosomal subunit protein bL34 (49 aa).

This sequence belongs to the bacterial ribosomal protein bL34 family.

This is Large ribosomal subunit protein bL34 from Sorangium cellulosum (strain So ce56) (Polyangium cellulosum (strain So ce56)).